The primary structure comprises 258 residues: Methylthioribulose-1-phosphate dehydratase (258 aa).

Residues 1–21 (MCSPTTENNNNNNDHLVQSSD) form a disordered region. Substrate is bound at residue Cys-105. Residues His-123 and His-125 each coordinate Zn(2+). Catalysis depends on Glu-153, which acts as the Proton donor/acceptor. Position 210 (His-210) interacts with Zn(2+).

This sequence belongs to the aldolase class II family. MtnB subfamily. Zn(2+) serves as cofactor.

The protein localises to the cytoplasm. The catalysed reaction is 5-(methylsulfanyl)-D-ribulose 1-phosphate = 5-methylsulfanyl-2,3-dioxopentyl phosphate + H2O. It functions in the pathway amino-acid biosynthesis; L-methionine biosynthesis via salvage pathway; L-methionine from S-methyl-5-thio-alpha-D-ribose 1-phosphate: step 2/6. Its function is as follows. Catalyzes the dehydration of methylthioribulose-1-phosphate (MTRu-1-P) into 2,3-diketo-5-methylthiopentyl-1-phosphate (DK-MTP-1-P). The protein is Methylthioribulose-1-phosphate dehydratase of Neurospora crassa (strain ATCC 24698 / 74-OR23-1A / CBS 708.71 / DSM 1257 / FGSC 987).